A 226-amino-acid chain; its full sequence is Histidine biosynthesis bifunctional protein HisIE (226 aa).

Residues 1-131 (MMPMNQEFIQ…STFNRPLSNT (131 aa)) are phosphoribosyl-AMP cyclohydrolase. Residues 132-226 (CSELFEVIKD…KRRQSKSNPK (95 aa)) are phosphoribosyl-ATP pyrophosphohydrolase.

This sequence in the N-terminal section; belongs to the PRA-CH family. In the C-terminal section; belongs to the PRA-PH family.

It is found in the cytoplasm. The enzyme catalyses 1-(5-phospho-beta-D-ribosyl)-ATP + H2O = 1-(5-phospho-beta-D-ribosyl)-5'-AMP + diphosphate + H(+). The catalysed reaction is 1-(5-phospho-beta-D-ribosyl)-5'-AMP + H2O = 1-(5-phospho-beta-D-ribosyl)-5-[(5-phospho-beta-D-ribosylamino)methylideneamino]imidazole-4-carboxamide. It functions in the pathway amino-acid biosynthesis; L-histidine biosynthesis; L-histidine from 5-phospho-alpha-D-ribose 1-diphosphate: step 2/9. The protein operates within amino-acid biosynthesis; L-histidine biosynthesis; L-histidine from 5-phospho-alpha-D-ribose 1-diphosphate: step 3/9. In Prochlorococcus marinus (strain SARG / CCMP1375 / SS120), this protein is Histidine biosynthesis bifunctional protein HisIE.